The primary structure comprises 226 residues: ATP synthase subunit a (226 aa).

6 helical membrane passes run 22–42, 73–93, 102–122, 135–155, 173–193, and 202–222; these read SMNW…FWLI, IIIF…SLIP, LLLN…YLIY, LNSP…SLII, LILT…PINL, and LEIF…ILYF.

It belongs to the ATPase A chain family. As to quaternary structure, F-type ATPases have 2 components, CF(1) - the catalytic core - and CF(0) - the membrane proton channel. CF(1) has five subunits: alpha(3), beta(3), gamma(1), delta(1), epsilon(1). CF(0) has three main subunits: a, b and c.

It is found in the mitochondrion inner membrane. Mitochondrial membrane ATP synthase (F(1)F(0) ATP synthase or Complex V) produces ATP from ADP in the presence of a proton gradient across the membrane which is generated by electron transport complexes of the respiratory chain. F-type ATPases consist of two structural domains, F(1) - containing the extramembraneous catalytic core and F(0) - containing the membrane proton channel, linked together by a central stalk and a peripheral stalk. During catalysis, ATP synthesis in the catalytic domain of F(1) is coupled via a rotary mechanism of the central stalk subunits to proton translocation. Key component of the proton channel; it may play a direct role in the translocation of protons across the membrane. The protein is ATP synthase subunit a (ATP6) of Apis mellifera ligustica (Common honeybee).